Consider the following 268-residue polypeptide: Tryptophan synthase alpha chain (268 aa).

Residues Glu49 and Asp60 each act as proton acceptor in the active site.

This sequence belongs to the TrpA family. As to quaternary structure, tetramer of two alpha and two beta chains.

The catalysed reaction is (1S,2R)-1-C-(indol-3-yl)glycerol 3-phosphate + L-serine = D-glyceraldehyde 3-phosphate + L-tryptophan + H2O. The protein operates within amino-acid biosynthesis; L-tryptophan biosynthesis; L-tryptophan from chorismate: step 5/5. The alpha subunit is responsible for the aldol cleavage of indoleglycerol phosphate to indole and glyceraldehyde 3-phosphate. In Vibrio vulnificus (strain CMCP6), this protein is Tryptophan synthase alpha chain.